Consider the following 400-residue polypeptide: Queuine tRNA-ribosyltransferase (400 aa).

The active-site Proton acceptor is the Asp93. Substrate-binding positions include 93–97, Asp147, Gln190, and Gly217; that span reads DSGGF. The interval 248-254 is RNA binding; sequence GVGSPED. The Nucleophile role is filled by Asp267. The RNA binding; important for wobble base 34 recognition stretch occupies residues 272-276; the sequence is TRIAR. Zn(2+) is bound by residues Cys305, Cys307, Cys310, and His336. The disordered stretch occupies residues 375 to 400; that stretch reads RRERARAAGGAGHAPGPAEPLLPENR. Low complexity predominate over residues 388–400; it reads APGPAEPLLPENR.

Belongs to the queuine tRNA-ribosyltransferase family. In terms of assembly, homodimer. Within each dimer, one monomer is responsible for RNA recognition and catalysis, while the other monomer binds to the replacement base PreQ1. It depends on Zn(2+) as a cofactor.

It carries out the reaction 7-aminomethyl-7-carbaguanine + guanosine(34) in tRNA = 7-aminomethyl-7-carbaguanosine(34) in tRNA + guanine. It functions in the pathway tRNA modification; tRNA-queuosine biosynthesis. In terms of biological role, catalyzes the base-exchange of a guanine (G) residue with the queuine precursor 7-aminomethyl-7-deazaguanine (PreQ1) at position 34 (anticodon wobble position) in tRNAs with GU(N) anticodons (tRNA-Asp, -Asn, -His and -Tyr). Catalysis occurs through a double-displacement mechanism. The nucleophile active site attacks the C1' of nucleotide 34 to detach the guanine base from the RNA, forming a covalent enzyme-RNA intermediate. The proton acceptor active site deprotonates the incoming PreQ1, allowing a nucleophilic attack on the C1' of the ribose to form the product. After dissociation, two additional enzymatic reactions on the tRNA convert PreQ1 to queuine (Q), resulting in the hypermodified nucleoside queuosine (7-(((4,5-cis-dihydroxy-2-cyclopenten-1-yl)amino)methyl)-7-deazaguanosine). The polypeptide is Queuine tRNA-ribosyltransferase (Symbiobacterium thermophilum (strain DSM 24528 / JCM 14929 / IAM 14863 / T)).